The primary structure comprises 142 residues: Large ribosomal subunit protein uL22 (142 aa).

Residues 122 to 142 (RAEAPEETKPSRGTNKEQKAA) form a disordered region.

It belongs to the universal ribosomal protein uL22 family. In terms of assembly, part of the 50S ribosomal subunit.

In terms of biological role, this protein binds specifically to 23S rRNA; its binding is stimulated by other ribosomal proteins, e.g. L4, L17, and L20. It is important during the early stages of 50S assembly. It makes multiple contacts with different domains of the 23S rRNA in the assembled 50S subunit and ribosome. The globular domain of the protein is located near the polypeptide exit tunnel on the outside of the subunit, while an extended beta-hairpin is found that lines the wall of the exit tunnel in the center of the 70S ribosome. The chain is Large ribosomal subunit protein uL22 from Gluconobacter oxydans (strain 621H) (Gluconobacter suboxydans).